The following is a 329-amino-acid chain: NADH-quinone oxidoreductase subunit H (329 aa).

8 consecutive transmembrane segments (helical) span residues 9–29 (ILKV…LTYV), 79–99 (IAPV…PFFP), 117–137 (VGIL…LLAG), 162–182 (VSGL…LIEI), 188–208 (GGIF…FLIA), 243–263 (FFIG…LLFF), 269–289 (LWFI…LFLF), and 309–329 (WKVL…VLIL).

Belongs to the complex I subunit 1 family. In terms of assembly, NDH-1 is composed of 14 different subunits. Subunits NuoA, H, J, K, L, M, N constitute the membrane sector of the complex.

The protein resides in the cell inner membrane. The enzyme catalyses a quinone + NADH + 5 H(+)(in) = a quinol + NAD(+) + 4 H(+)(out). NDH-1 shuttles electrons from NADH, via FMN and iron-sulfur (Fe-S) centers, to quinones in the respiratory chain. The immediate electron acceptor for the enzyme in this species is believed to be ubiquinone. Couples the redox reaction to proton translocation (for every two electrons transferred, four hydrogen ions are translocated across the cytoplasmic membrane), and thus conserves the redox energy in a proton gradient. This subunit may bind ubiquinone. The chain is NADH-quinone oxidoreductase subunit H from Wolinella succinogenes (strain ATCC 29543 / DSM 1740 / CCUG 13145 / JCM 31913 / LMG 7466 / NCTC 11488 / FDC 602W) (Vibrio succinogenes).